A 133-amino-acid polypeptide reads, in one-letter code: uncharacterized protein (133 aa).

An HIT domain is found at 3 to 106 (IFTKIINREL…PTRSLSDFGF (104 aa)). The Histidine triad motif motif lies at 90–94 (HLHIH).

This is an uncharacterized protein from Mycobacterium tuberculosis (strain ATCC 25618 / H37Rv).